We begin with the raw amino-acid sequence, 180 residues long: NAD(P)H-quinone oxidoreductase subunit I, chloroplastic (180 aa).

4Fe-4S ferredoxin-type domains follow at residues 55-84 (GRIHFEFDKCIACEVCVRVCPIDLPVVDWR) and 95-124 (LNYSIDFGICIFCGNCVEYCPTNCLSMTEE). Positions 64, 67, 70, 74, 104, 107, 110, and 114 each coordinate [4Fe-4S] cluster.

This sequence belongs to the complex I 23 kDa subunit family. As to quaternary structure, NDH is composed of at least 16 different subunits, 5 of which are encoded in the nucleus. [4Fe-4S] cluster serves as cofactor.

The protein resides in the plastid. Its subcellular location is the chloroplast thylakoid membrane. It catalyses the reaction a plastoquinone + NADH + (n+1) H(+)(in) = a plastoquinol + NAD(+) + n H(+)(out). The enzyme catalyses a plastoquinone + NADPH + (n+1) H(+)(in) = a plastoquinol + NADP(+) + n H(+)(out). Its function is as follows. NDH shuttles electrons from NAD(P)H:plastoquinone, via FMN and iron-sulfur (Fe-S) centers, to quinones in the photosynthetic chain and possibly in a chloroplast respiratory chain. The immediate electron acceptor for the enzyme in this species is believed to be plastoquinone. Couples the redox reaction to proton translocation, and thus conserves the redox energy in a proton gradient. This Illicium oligandrum (Star anise) protein is NAD(P)H-quinone oxidoreductase subunit I, chloroplastic.